A 97-amino-acid chain; its full sequence is uncharacterized protein (97 aa).

A signal peptide spans 1–21 (MNKKFSISLLSTILAFLLVLG). Cys22 is lipidated: N-palmitoyl cysteine. Residue Cys22 is the site of S-diacylglycerol cysteine attachment.

To B.burgdorferi BBD15.

Its subcellular location is the cell membrane. This is an uncharacterized protein from Borreliella burgdorferi (strain ATCC 35210 / DSM 4680 / CIP 102532 / B31) (Borrelia burgdorferi).